We begin with the raw amino-acid sequence, 1194 residues long: MFSLDSFRKDRAQHRQRQCKLPPPRLPPMCVNPTPGGTISRASRDLLKEFPQPKNLLNSVIGRALGISHAKDKLVYVHTNGPKKKKVTLHIKWPKSVEVEGYGSKKIDAERQAAAAACQLFKGWGLLGPRNELFDAAKYRVLADRFGSPADSWWRPEPTMPPTSWRQLNPESIRPGGPGGLSRSLGREEEEDEEEELEEGTIDVTDFLSMTQQDSHAPLRDSRGSSFEMTDDDSAIRALTQFPLPKNLLAKVIQIATSSSTAKNLMQFHTVGTKTKLSTLTLLWPCPMTFVAKGRRKAEAENKAAALACKKLKSLGLVDRNNEPLTHAMYNLASLRELGETQRRPCTIQVPEPILRKIETFLNHYPVESSWIAPELRLQSDDILPLGKDSGPLSDPITGKPYVPLLEAEEVRLSQSLLELWRRRGPVWQEAPQLPVDPHRDTILNAIEQHPVVVISGDTGCGKTTRIPQLLLERYVTEGRGARCNVIITQPRRISAVSVAQRVSHELGPSLRRNVGFQVRLESKPPSRGGALLFCTVGILLRKLQSNPSLEGVSHVIVDEVHERDVNTDFLLILLKGLQRLNPALRLVLMSATGDNERFSRYFGGCPVIKVPGFMYPVKEHYLEDILAKLGKHQYLHRHRHHESEDECALDLDLVTDLVLHIDARGEPGGILCFLPGWQEIKGVQQRLQEALGMHESKYLILPVHSNIPMMDQKAIFQQPPVGVRKIVLATNIAETSITINDIVHVVDSGLHKEERYDLKTKVSCLETVWVSRANVIQRRGRAGRCQSGFAYHLFPRSRLEKMVPFQVPEILRTPLENLVLQAKIHMPEKTAVEFLSKAVDSPNIKAVDEAVILLQEIGVLDQREYLTTLGQRLAHISTDPRLAKAIVLAAIFRCLHPLLVVVSCLTRDPFSSSLQNRAEVDKVKALLSHDSGSDHLAFVRAVAGWEEVLRWQDRSSRENYLEENLLYAPSLRFIHGLIKQFSENIYEAFLVGKPSDCTLASAQCNEYSEEEELVKGVLMAGLYPNLIQVRQGKVTRQGKFKPNSVTYRTKSGNILLHKSTINREATRLRSRWLTYFMAVKSNGSVFVRDSSQVHPLAVLLLTDGDVHIRDDGRRATISLSDSDLLRLEGDSRTVRLLKELRRALGRMVERSLRSELAALPPSVQEEHGQLLALLAELLRGPCGSFDVRKTADD.

Positions Met-1–Asp-10 are enriched in basic and acidic residues. Residues Met-1–Pro-27 form a disordered region. Ser-6 and Arg-15 each carry phosphoserine. In terms of domain architecture, DRBM spans Pro-53–Phe-121. A disordered region spans residues Ala-150–Glu-199. A compositionally biased stretch (acidic residues) spans Glu-188–Glu-199. Phosphoserine is present on residues Ser-226 and Ser-380. Residues Leu-444–Pro-612 form the Helicase ATP-binding domain. Gly-457–Thr-464 serves as a coordination point for ATP. The short motif at Asp-559–His-562 is the DEAH box element. The Helicase C-terminal domain occupies Leu-654–Met-827.

Belongs to the DEAD box helicase family. DEAH subfamily. As to quaternary structure, identified in a complex with TFAM and SSBP1. Interacts with AGO1 and AGO2. Interacts (via N-terminus) with ZC3HAV1 (via N-terminal domain) in an RNA-independent manner. Found in a complex with GRSF1, DDX28, FASTKD2 and FASTKD5. In terms of processing, phosphorylated on Ser-15.

It localises to the cytoplasm. Its subcellular location is the mitochondrion. It is found in the mitochondrion matrix. The protein resides in the mitochondrion nucleoid. The enzyme catalyses ATP + H2O = ADP + phosphate + H(+). Its function is as follows. RNA-dependent helicase. Plays an important role in the assembly of the mitochondrial large ribosomal subunit. Required for optimal function of the zinc-finger antiviral protein ZC3HAV1. Associates with mitochondrial DNA. Involved in nervous system development and differentiation through its involvement in the up-regulation of a number of genes which are required for neurogenesis, including GSC, NCAM1, neurogenin, and NEUROD. This is ATP-dependent RNA helicase DHX30 (DHX30) from Homo sapiens (Human).